The chain runs to 235 residues: MNWRSERIWIELITGSRKTSNLCWACILFLGSLGFLLVGTSSYLGRNLISLFPSQQILFFPQGIVMSFYGIAGLFISSYLWCTILWNVGSGYDRFDRKEGIVCIFRWGFPGRNRRIFFRFLMRDIRSIRMEVKEGIYPRRVLSIEIRSQGSIPLTRTDENFTPREIEQKAAELAYFLRVPIEVFRTKEWILSRHGVGNPRILFNTTDLSSEQLLIRSKHVSVRSYFRSLLFPVCG.

Helical transmembrane passes span 21-43 (NLCW…TSSY) and 63-85 (GIVM…CTIL).

This sequence belongs to the Ycf4 family.

The protein resides in the plastid. It localises to the chloroplast thylakoid membrane. Its function is as follows. Seems to be required for the assembly of the photosystem I complex. The protein is Photosystem I assembly protein Ycf4 of Amborella trichopoda.